Reading from the N-terminus, the 311-residue chain is Aspartate carbamoyltransferase catalytic subunit (311 aa).

R58 and T59 together coordinate carbamoyl phosphate. K86 serves as a coordination point for L-aspartate. 3 residues coordinate carbamoyl phosphate: R108, H136, and Q139. The L-aspartate site is built by R169 and R224. Carbamoyl phosphate is bound by residues G265 and P266.

The protein belongs to the aspartate/ornithine carbamoyltransferase superfamily. ATCase family. Heterododecamer (2C3:3R2) of six catalytic PyrB chains organized as two trimers (C3), and six regulatory PyrI chains organized as three dimers (R2).

The enzyme catalyses carbamoyl phosphate + L-aspartate = N-carbamoyl-L-aspartate + phosphate + H(+). It participates in pyrimidine metabolism; UMP biosynthesis via de novo pathway; (S)-dihydroorotate from bicarbonate: step 2/3. Its function is as follows. Catalyzes the condensation of carbamoyl phosphate and aspartate to form carbamoyl aspartate and inorganic phosphate, the committed step in the de novo pyrimidine nucleotide biosynthesis pathway. The sequence is that of Aspartate carbamoyltransferase catalytic subunit from Geotalea uraniireducens (strain Rf4) (Geobacter uraniireducens).